A 63-amino-acid chain; its full sequence is Chymotrypsin/elastase isoinhibitor 1 (63 aa).

5 cysteine pairs are disulfide-bonded: cysteine 5/cysteine 38, cysteine 14/cysteine 33, cysteine 17/cysteine 29, cysteine 21/cysteine 60, and cysteine 40/cysteine 54. One can recognise a TIL domain in the interval 5-60; sequence CGPNEVWTECTGCEMKCGPDENTPCPLMCRRPSCECSPGRGMRRTNDGKCIPASQC.

This sequence belongs to the serine protease inhibitor-like (TIL domain-containing) family.

The protein resides in the secreted. Defends the organism against the host's proteinases. The chain is Chymotrypsin/elastase isoinhibitor 1 from Ascaris suum (Pig roundworm).